Reading from the N-terminus, the 291-residue chain is Phytanoyl-CoA dioxygenase domain-containing protein 1 (291 aa).

At Thr-55 the chain carries Phosphothreonine. 2-oxoglutarate contacts are provided by residues Lys-102, Met-141, 156–158, and Trp-174; that span reads HQD. The Fe cation site is built by His-156 and Asp-158. Fe cation is bound at residue His-246. Positions 248 and 257 each coordinate 2-oxoglutarate.

This sequence belongs to the PhyH family. PHYHD1 subfamily. The cofactor is Fe cation.

Its function is as follows. 2-oxoglutarate(2OG)-dependent dioxygenase that catalyzes the conversion of 2-oxoglutarate to succinate and CO(2) in an iron-dependent manner. However, does not couple 2OG turnover to the hydroxylation of acyl-coenzyme A derivatives, implying that it is not directly involved in phytanoyl coenzyme-A metabolism. Does not show detectable activity towards fatty acid CoA thioesters. This chain is Phytanoyl-CoA dioxygenase domain-containing protein 1 (Phyhd1), found in Rattus norvegicus (Rat).